We begin with the raw amino-acid sequence, 335 residues long: Ornithine carbamoyltransferase (335 aa).

Carbamoyl phosphate-binding positions include 57–60, R108, and 135–138; these read STRT and HPTQ. Residues N168, D232, and 236–237 contribute to the L-ornithine site; that span reads SM. Residues 274-275 and R319 contribute to the carbamoyl phosphate site; that span reads CL.

This sequence belongs to the aspartate/ornithine carbamoyltransferase superfamily. OTCase family.

The protein localises to the cytoplasm. It carries out the reaction carbamoyl phosphate + L-ornithine = L-citrulline + phosphate + H(+). The protein operates within amino-acid degradation; L-arginine degradation via ADI pathway; carbamoyl phosphate from L-arginine: step 2/2. Functionally, reversibly catalyzes the transfer of the carbamoyl group from carbamoyl phosphate (CP) to the N(epsilon) atom of ornithine (ORN) to produce L-citrulline. This chain is Ornithine carbamoyltransferase, found in Limosilactobacillus reuteri (strain DSM 20016) (Lactobacillus reuteri).